The sequence spans 405 residues: Imidazolonepropionase (405 aa).

Fe(3+) is bound by residues histidine 73 and histidine 75. Positions 73 and 75 each coordinate Zn(2+). 4-imidazolone-5-propanoate-binding residues include arginine 82, tyrosine 145, and histidine 178. Tyrosine 145 is an N-formimidoyl-L-glutamate binding site. Position 243 (histidine 243) interacts with Fe(3+). Histidine 243 lines the Zn(2+) pocket. Glutamine 246 is a 4-imidazolone-5-propanoate binding site. Aspartate 318 provides a ligand contact to Fe(3+). Aspartate 318 lines the Zn(2+) pocket. Residues asparagine 320 and glycine 322 each coordinate N-formimidoyl-L-glutamate. Threonine 323 is a 4-imidazolone-5-propanoate binding site.

This sequence belongs to the metallo-dependent hydrolases superfamily. HutI family. It depends on Zn(2+) as a cofactor. Fe(3+) serves as cofactor.

It is found in the cytoplasm. The enzyme catalyses 4-imidazolone-5-propanoate + H2O = N-formimidoyl-L-glutamate. It functions in the pathway amino-acid degradation; L-histidine degradation into L-glutamate; N-formimidoyl-L-glutamate from L-histidine: step 3/3. Functionally, catalyzes the hydrolytic cleavage of the carbon-nitrogen bond in imidazolone-5-propanoate to yield N-formimidoyl-L-glutamate. It is the third step in the universal histidine degradation pathway. The protein is Imidazolonepropionase of Brucella anthropi (strain ATCC 49188 / DSM 6882 / CCUG 24695 / JCM 21032 / LMG 3331 / NBRC 15819 / NCTC 12168 / Alc 37) (Ochrobactrum anthropi).